Consider the following 170-residue polypeptide: Shikimate kinase (170 aa).

ATP is bound at residue 11-16; it reads LSGKST. Residue Ser15 participates in Mg(2+) binding. Residues Asp33, Arg57, and Gly79 each contribute to the substrate site. Arg119 lines the ATP pocket. Arg137 lines the substrate pocket.

It belongs to the shikimate kinase family. In terms of assembly, monomer. Requires Mg(2+) as cofactor.

The protein resides in the cytoplasm. The catalysed reaction is shikimate + ATP = 3-phosphoshikimate + ADP + H(+). Its pathway is metabolic intermediate biosynthesis; chorismate biosynthesis; chorismate from D-erythrose 4-phosphate and phosphoenolpyruvate: step 5/7. In terms of biological role, catalyzes the specific phosphorylation of the 3-hydroxyl group of shikimic acid using ATP as a cosubstrate. This chain is Shikimate kinase, found in Clostridium botulinum (strain Okra / Type B1).